The primary structure comprises 259 residues: MNTQTAPSPQFYLTAPAACPYLPNQMERKVFTHMVGERAPELNDLLTQGGFRRSQNIAYRPACETCRACISVRILTNEFAPTRSMRRVLAANGEIVSAEYPAEPSSEQYNLFRRYLDCRHQKGGMSDMSVLDYAMMVEDTHVHTKIIEYRLRVEGDGINDKARGPLIATALTDRMSDGLSMVYSFFDPALSERSLGTYMILDHIRRAKERGLPHVYLGYWVKGSRKMGYKTKFLPQEHLMARGWERYSGEHDSTKPATD.

The protein belongs to the R-transferase family. Bpt subfamily.

It localises to the cytoplasm. It catalyses the reaction N-terminal L-glutamyl-[protein] + L-leucyl-tRNA(Leu) = N-terminal L-leucyl-L-glutamyl-[protein] + tRNA(Leu) + H(+). The enzyme catalyses N-terminal L-aspartyl-[protein] + L-leucyl-tRNA(Leu) = N-terminal L-leucyl-L-aspartyl-[protein] + tRNA(Leu) + H(+). In terms of biological role, functions in the N-end rule pathway of protein degradation where it conjugates Leu from its aminoacyl-tRNA to the N-termini of proteins containing an N-terminal aspartate or glutamate. The chain is Aspartate/glutamate leucyltransferase from Rhizobium meliloti (strain 1021) (Ensifer meliloti).